The sequence spans 1041 residues: RAS protein activator like-3 (1041 aa).

A disordered region spans residues 1–59 (MKPECGQTMFRTFWSRSRDSSAMDPPLQSEEDSQTQPSLPSPLTSYRWHTGGSGEKAAG). Polar residues predominate over residues 34–44 (QTQPSLPSPLT). Residues Ser41, Ser74, Ser187, Ser189, Ser190, Ser193, Ser239, Ser252, Ser256, and Ser259 each carry the phosphoserine modification. The stretch at 218–243 (SNQVHNVRKLLKRLKEKKRAKSELGA) forms a coiled coil. Residues 220–321 (QVHNVRKLLK…WIEDLRRQFQ (102 aa)) enclose the PH domain. The tract at residues 234–256 (KKRAKSELGAYTPRDGPPSALGS) is disordered. Thr262 carries the phosphothreonine modification. The C2 domain occupies 312-430 (WIEDLRRQFQ…APAAGLERWF (119 aa)). In terms of domain architecture, Ras-GAP spans 500–708 (GRAQALVTDL…PAMQHFLDQV (209 aa)). Residues 790–910 (GEKPGFLAPR…PGDRYQTTGT (121 aa)) are disordered. Ser813 and Ser816 each carry phosphoserine. The segment covering 850–866 (RPTHRRPSAGSKPRPKG) has biased composition (basic residues). A coiled-coil region spans residues 931–1013 (QKALSLLVES…LRDSLQSLQL (83 aa)). Residues 1016–1041 (KTPGSRSQPLPLKAPCVNGADLSMGT) are disordered.

As to expression, predominantly expressed in hematopoietic tissues.

The protein localises to the cytoplasm. The protein resides in the cell cortex. In terms of biological role, functions as a Ras GTPase-activating protein. Plays an important role in the expansion and functions of natural killer T (NKT) cells in the liver by negatively regulating RAS activity and the down-stream ERK signaling pathway. This chain is RAS protein activator like-3 (Rasal3), found in Mus musculus (Mouse).